Consider the following 156-residue polypeptide: Deoxyuridine 5'-triphosphate nucleotidohydrolase (156 aa).

Substrate-binding positions include 76–78, Asn-89, 93–95, and Lys-103; these read RSG and TVD.

This sequence belongs to the dUTPase family. The cofactor is Mg(2+).

The enzyme catalyses dUTP + H2O = dUMP + diphosphate + H(+). It participates in pyrimidine metabolism; dUMP biosynthesis; dUMP from dCTP (dUTP route): step 2/2. In terms of biological role, this enzyme is involved in nucleotide metabolism: it produces dUMP, the immediate precursor of thymidine nucleotides and it decreases the intracellular concentration of dUTP so that uracil cannot be incorporated into DNA. The chain is Deoxyuridine 5'-triphosphate nucleotidohydrolase from Rhizobium rhizogenes (strain K84 / ATCC BAA-868) (Agrobacterium radiobacter).